Reading from the N-terminus, the 341-residue chain is Inositol 2-dehydrogenase (341 aa).

It belongs to the Gfo/Idh/MocA family. In terms of assembly, homotetramer.

The enzyme catalyses myo-inositol + NAD(+) = scyllo-inosose + NADH + H(+). In terms of biological role, involved in the oxidation of myo-inositol (MI) to 2-keto-myo-inositol (2KMI or 2-inosose). The sequence is that of Inositol 2-dehydrogenase from Acidothermus cellulolyticus (strain ATCC 43068 / DSM 8971 / 11B).